Consider the following 237-residue polypeptide: Ribosomal RNA small subunit methyltransferase G (237 aa).

Residues G76, F81, 128 to 129 (VE), and R147 each bind S-adenosyl-L-methionine.

The protein belongs to the methyltransferase superfamily. RNA methyltransferase RsmG family.

It is found in the cytoplasm. Its function is as follows. Specifically methylates the N7 position of a guanine in 16S rRNA. The protein is Ribosomal RNA small subunit methyltransferase G of Prochlorococcus marinus (strain AS9601).